We begin with the raw amino-acid sequence, 760 residues long: Metal transporter cnnm-2 (760 aa).

The first 21 residues, 1–21, serve as a signal peptide directing secretion; the sequence is MIIKVFLRLLLLCAHIVCIDG. The Extracellular segment spans residues 22-153; sequence KLEIRPVVSG…ETFMPVWAQC (132 aa). An N-linked (GlcNAc...) asparagine glycan is attached at N88. The CNNM transmembrane domain maps to 145–323; that stretch reads TFMPVWAQCA…MENDACDIDL (179 aa). The chain crosses the membrane as a helical span at residues 154-174; it reads AILCLLFSISALCSGLTLGLM. The Cytoplasmic segment spans residues 175 to 208; it reads ALTPQELSILMKSGSQREKKHAAAIYPIRCHGNR. Residues 209–229 traverse the membrane as a helical segment; it reads LLCTVIIMNVIVNTGITLLFD. D230 is a topological domain (extracellular). The helical transmembrane segment at 231–251 threads the bilayer; the sequence is LAEGLIAFVASTVGIVVFGEI. Over 252–261 the chain is Cytoplasmic; the sequence is LPQSICVKYG. A helical transmembrane segment spans residues 262–282; the sequence is LAVGANTIFITKFFMFLLFPI. Topologically, residues 283-760 are extracellular; that stretch reads TWPLGKILDK…SVEELKPLME (478 aa). N-linked (GlcNAc...) asparagine glycans are attached at residues N302 and N403. CBS domains follow at residues 344–406 and 442–512; these read MTDI…NITV and MVAK…ITDE. Residues N528, N592, and N667 are each glycosylated (N-linked (GlcNAc...) asparagine). The segment at 708–734 is disordered; the sequence is DDFGSPTRKASILDSSPNSRKRSSTSV.

Belongs to the ACDP family.

It is found in the cell membrane. Probable metal transporter. Probably acts redundantly with the other metal transport proteins cnnm-1, cnnm-3, cnnm-4 and cnnm-5 to regulate Mg(2+) homeostasis. The chain is Metal transporter cnnm-2 from Caenorhabditis elegans.